Reading from the N-terminus, the 519-residue chain is Lysine histidine transporter-like 8 (519 aa).

The interval 1–44 (MDERPETELISIPATPRVSTPEILTPSGQRSPRPATKPSSATWT) is disordered. Residues 1 to 114 (MDERPETELI…NLNAGVGFQA (114 aa)) are Cytoplasmic-facing. 2 helical membrane passes run 115-135 (LVLPVAFAFLGWSWGILSLTI) and 136-156 (AYCWQLYTLWILVQLHEAVPG). Residues 157–176 (KRYNRYVELAQAAFGERLGV) are Cytoplasmic-facing. The chain crosses the membrane as a helical span at residues 177 to 197 (WLALFPTVYLSAGTATALILI). Residues 198–217 (GGETMKLFFQIVCGPLCTSN) are Extracellular-facing. The chain crosses the membrane as a helical span at residues 218-238 (PLTTVEWYLVFTSLCIVLSQL). At 239–243 (PNLNS) the chain is on the cytoplasmic side. A helical transmembrane segment spans residues 244–264 (IAGLSLIGAVTAITYSTMVWV). Residues 265 to 282 (LSVSQPRPATISYEPLSM) are Extracellular-facing. Residues 283–303 (PSTSGSLFAVLNALGIIAFAF) traverse the membrane as a helical segment. The Cytoplasmic segment spans residues 304-333 (RGHNLVLEIQSTMPSTFKHPAHVPMWRGAK). A helical membrane pass occupies residues 334-354 (ISYFLIALCIFPISIGGFWAY). At 355–377 (GNLMPSGGMLAALYAFHIHDIPR) the chain is on the extracellular side. The helical transmembrane segment at 378–398 (GLLATAFLLVVFSCLSSFQIY) threads the bilayer. Topologically, residues 399–427 (SMPAFDSFEAGYTSRTNKPCSIWVRSGFR) are cytoplasmic. The helical transmembrane segment at 428 to 448 (VFFGFVSFFIGVALPFLSSLA) threads the bilayer. Residue G449 is a topological domain, extracellular. The helical transmembrane segment at 450–470 (LLGGLTLPVTFAYPCFMWVLI) threads the bilayer. Over 471–485 (KKPAKYSFNWYFHWG) the chain is Cytoplasmic. Residues 486 to 506 (LGWLGVAFSLAFSIGGIWSMV) form a helical membrane-spanning segment. The Extracellular segment spans residues 507 to 519 (TNGLKLKFFKPPN).

The protein belongs to the amino acid/polyamine transporter 2 family. Amino acid/auxin permease (AAAP) (TC 2.A.18.2) subfamily.

It localises to the cell membrane. In terms of biological role, amino acid transporter. The sequence is that of Lysine histidine transporter-like 8 (AATL1) from Arabidopsis thaliana (Mouse-ear cress).